A 164-amino-acid polypeptide reads, in one-letter code: Cytochrome c-type biogenesis protein CcmE (164 aa).

Over 1–8 the chain is Cytoplasmic; the sequence is MNPRRQKR. A helical; Signal-anchor for type II membrane protein membrane pass occupies residues 9 to 29; the sequence is LIVISAIVLVIGAAIGLMLYA. Topologically, residues 30–164 are periplasmic; it reads LSQNIDLFYT…QAYSTPKVSG (135 aa). His-132 and Tyr-136 together coordinate heme.

This sequence belongs to the CcmE/CycJ family.

Its subcellular location is the cell inner membrane. Functionally, heme chaperone required for the biogenesis of c-type cytochromes. Transiently binds heme delivered by CcmC and transfers the heme to apo-cytochromes in a process facilitated by CcmF and CcmH. The polypeptide is Cytochrome c-type biogenesis protein CcmE (Pseudoalteromonas atlantica (strain T6c / ATCC BAA-1087)).